An 81-amino-acid chain; its full sequence is Short neurotoxin 1 (81 aa).

The N-terminal stretch at 1 to 21 is a signal peptide; it reads MKTLLLTLVVVTIVFLDLGYT. 4 disulfide bridges follow: C24-C43, C38-C60, C62-C73, and C74-C79.

This sequence belongs to the three-finger toxin family. Short-chain subfamily. Type I alpha-neurotoxin sub-subfamily. Expressed by the venom gland.

Its subcellular location is the secreted. Binds to muscle nicotinic acetylcholine receptor (nAChR) and inhibit acetylcholine from binding to the receptor, thereby impairing neuromuscular transmission. This chain is Short neurotoxin 1, found in Notechis scutatus scutatus (Mainland tiger snake).